Reading from the N-terminus, the 551-residue chain is MARSGLDRIDISPQPAKKIARVGGLQHPFVKTDINTINVEHHFIDTLQKTSPNMDCRGMTAGIFIRLSHMYKILTTLESPNDVTYTTPGSTNALFFKTSTQPQEPRPEELASKLTQDDIKRILLTIESETRGQGDNAIWTLLRRNLITASTLKWSVSGPVIPPQWFYHHNTTDTYGDAAAMAFGKTNEPAARAIVEALFIDPADIRTPDHLTPEATTKFFNFDMLNTKSPSLLVGTPRIGTYECGLLIDVRTGLIGASLDVLVCDRDPLTGTLNPHPAETDISFFEIKCRAKYLFDPDDKNNPLGRTYTTLINRPTMANLRDFLYTIKNPCVSFFGPSANPSTREALITDHVEWKRLGFKGGRALTELDAHHLGLNRTISSRVWVFNDPDIQKGTITTIAWATGDTALQIPVFANPRHANFKQIAVQTYVLSGYFPALKLRPFLVTFIGRVRRPHEVGVPLRVDTQAAAIYEYNWPTIPPHCAVPVIAVLTPIEVDVPRVTQILKDTGNNAITSALRSLRWDNLHPAVEEESVDCANGTTSLLRATEKPLL.

It belongs to the herpesviridae alkaline nuclease family. As to quaternary structure, interacts with major DNA-binding protein; this interaction increases the nuclease processivity of the alkaline exonuclease.

The protein localises to the host nucleus. It localises to the host cytoplasm. Plays a role in processing non linear or branched viral DNA intermediates in order to promote the production of mature packaged unit-length linear progeny viral DNA molecules. Exhibits endonuclease and exonuclease activities and accepts both double-stranded and single-stranded DNA as substrate. Exonuclease digestion of DNA is in the 5'-&gt; 3' direction and the products are 5'-monophosphate nucleosides. Additionally, forms a recombinase with the major DNA-binding protein, which displays strand exchange activity. The polypeptide is Alkaline nuclease (Homo sapiens (Human)).